The chain runs to 594 residues: Glutamate decarboxylase 1 (594 aa).

Positions 1-13 (MASSTPSSSATSS) are enriched in low complexity. Residues 1 to 23 (MASSTPSSSATSSNAGADPNTTN) are disordered. Ser-78 carries the phosphoserine modification. 190-192 (QLS) serves as a coordination point for 4-aminobutanoate. Residue Lys-405 is modified to N6-(pyridoxal phosphate)lysine. Arg-567 lines the 4-aminobutanoate pocket.

This sequence belongs to the group II decarboxylase family. As to quaternary structure, homodimer. It depends on pyridoxal 5'-phosphate as a cofactor.

It catalyses the reaction L-glutamate + H(+) = 4-aminobutanoate + CO2. Catalyzes the synthesis of the inhibitory neurotransmitter gamma-aminobutyric acid (GABA) with pyridoxal 5'-phosphate as cofactor. In Felis catus (Cat), this protein is Glutamate decarboxylase 1 (GAD1).